Reading from the N-terminus, the 312-residue chain is Deoxyribonuclease Tat-D (312 aa).

Residues E124, H161, H187, and D235 each contribute to the a divalent metal cation site.

Belongs to the metallo-dependent hydrolases superfamily. TatD-type hydrolase family. A divalent metal cation is required as a cofactor.

The protein localises to the cytoplasm. Its subcellular location is the nucleus. Its function is as follows. Has both endo- and exonuclease activities. Incises double-stranded DNA without obvious specificity via its endonuclease activity and excises the DNA from the 3'-to 5'-end by its exonuclease activity. May have a role in apoptosis. The sequence is that of Deoxyribonuclease Tat-D from Schizosaccharomyces pombe (strain 972 / ATCC 24843) (Fission yeast).